The primary structure comprises 99 residues: Aspartyl/glutamyl-tRNA(Asn/Gln) amidotransferase subunit C (99 aa).

This sequence belongs to the GatC family. In terms of assembly, heterotrimer of A, B and C subunits.

The enzyme catalyses L-glutamyl-tRNA(Gln) + L-glutamine + ATP + H2O = L-glutaminyl-tRNA(Gln) + L-glutamate + ADP + phosphate + H(+). The catalysed reaction is L-aspartyl-tRNA(Asn) + L-glutamine + ATP + H2O = L-asparaginyl-tRNA(Asn) + L-glutamate + ADP + phosphate + 2 H(+). Functionally, allows the formation of correctly charged Asn-tRNA(Asn) or Gln-tRNA(Gln) through the transamidation of misacylated Asp-tRNA(Asn) or Glu-tRNA(Gln) in organisms which lack either or both of asparaginyl-tRNA or glutaminyl-tRNA synthetases. The reaction takes place in the presence of glutamine and ATP through an activated phospho-Asp-tRNA(Asn) or phospho-Glu-tRNA(Gln). The sequence is that of Aspartyl/glutamyl-tRNA(Asn/Gln) amidotransferase subunit C from Corynebacterium diphtheriae (strain ATCC 700971 / NCTC 13129 / Biotype gravis).